A 280-amino-acid chain; its full sequence is uncharacterized protein (280 aa).

N-linked (GlcNAc...) asparagine; by host glycosylation is found at Asn-75, Asn-98, Asn-107, Asn-143, Asn-158, Asn-170, Asn-192, Asn-207, Asn-224, and Asn-230. Residues 235-255 (AFTYGSWGVAMLLFAAVMVLV) form a helical membrane-spanning segment.

Belongs to the RL11 family.

Its subcellular location is the host membrane. This is an uncharacterized protein from Human cytomegalovirus (strain Merlin) (HHV-5).